The chain runs to 72 residues: Conotoxin Gla(2)-TxVI/A (72 aa).

Residues 1 to 19 (MQKLIILLLVAAVLMSTQA) form the signal peptide. The propeptide occupies 20–44 (LFQEKRPMKKIDFLSKGKTDAEKQQ). 3 disulfides stabilise this stretch: C48–C62, C55–C66, and C61–C70. E56 bears the 4-carboxyglutamate mark. P58 bears the 4-hydroxyproline mark. S71 bears the Serine amide mark.

This sequence belongs to the conotoxin O2 superfamily. In terms of processing, brominated at one of the Trp residues. As to expression, expressed by the venom duct.

Its subcellular location is the secreted. In Conus textile (Cloth-of-gold cone), this protein is Conotoxin Gla(2)-TxVI/A.